A 72-amino-acid polypeptide reads, in one-letter code: Disintegrin batroxostatin (72 aa).

The 72-residue stretch at 1–72 folds into the Disintegrin domain; sequence EAGEECDCGA…SADCPRNRFY (72 aa). Disulfide bonds link Cys6–Cys21, Cys8–Cys16, Cys15–Cys38, Cys29–Cys35, Cys34–Cys59, and Cys47–Cys66. Positions 51 to 53 match the Cell attachment site motif; that stretch reads RGD. Positions 52-72 are disordered; that stretch reads GDNPDDRCTGQSADCPRNRFY.

The protein belongs to the venom metalloproteinase (M12B) family. P-II subfamily. P-IIa sub-subfamily. Monomer. Expressed by the venom gland.

It is found in the secreted. In terms of biological role, inhibits fibrinogen interaction with platelets. Acts by binding to the glycoprotein IIb-IIIa receptor (ITGA2B/ITGB3) on the platelet surface and inhibits aggregation induced by ADP, thrombin, platelet-activating factor and collagen. Also inhibits T24 and SK-Mel-28 cell adhesion to fibronectin with IC(50) of 4.4 uM and 33 nM, respectively. This chain is Disintegrin batroxostatin, found in Bothrops atrox (Barba amarilla).